The chain runs to 52 residues: Large ribosomal subunit protein bL32c (52 aa).

Belongs to the bacterial ribosomal protein bL32 family.

It is found in the plastid. The protein localises to the chloroplast. The chain is Large ribosomal subunit protein bL32c from Lobularia maritima (Sweet alyssum).